We begin with the raw amino-acid sequence, 544 residues long: Rubrofusarin-specific efflux pump aurT (544 aa).

Positions 1-12 (MTDNTDMEKLDR) are enriched in basic and acidic residues. Positions 1–42 (MTDNTDMEKLDRATTPTPIPNEAPPTSEPSESKPEEAEDESK) are disordered. Residues 17–27 (TPIPNEAPPTS) show a composition bias toward pro residues. The segment covering 30-42 (SESKPEEAEDESK) has biased composition (basic and acidic residues). Transmembrane regions (helical) follow at residues 45–65 (HGLKLAAIILSNMVAMFLVAL), 89–111 (WYASAYLITSSATQLLWGRIFTF), 116–136 (TVYLVAIFFFELGSLLCGVAP), 146–166 (AIAGAGSAGIYSGSTILITTV), 177–197 (GMMGAVFGIASVIAPLIGGAF), 205–225 (WCFYINLPVGGAAVACLILLF), 246–266 (WGNLVFLPGVICLILALQWGG), and 276–296 (IVALLVLACVLLLVFIGIQIW). The N-linked (GlcNAc...) asparagine glycan is linked to Asn300. Helical transmembrane passes span 318-338 (IFAFCLGSVLIVFLIALPIWF), 357-377 (VLSLVFGAIVSGGVINGVGWF), 380-400 (VFFSSVIFMSVGGGLITTFVV), 407-427 (WIGYQIILGLGIGQGMQLASL), 444-464 (LMFFAQSLGGSVLVCVAQAVF), and 514-534 (YFYVGLAAACFAVLPSLGIEW).

It belongs to the major facilitator superfamily. TCR/Tet family.

Its subcellular location is the cell membrane. It participates in pigment biosynthesis. Its function is as follows. Rubrofusarin-specific efflux pump; part of the gene cluster that mediates the biosynthesis of aurofusarin, a red mycelium pigment which is acting as a mycotoxin. The first step is performed by the polyketide synthase which condenses one acetyl-CoA and 6 malonyl-CoA units to form the first intermediate, the cyclic heptaketide and yellow pigment YWA1. The C2 hydroxyl group in the pyrone ring of YWA1 is probably formed during ring closure by an aldol-type cyclization reaction. The dehydratase aurZ then acts as the first tailoring enzyme in the aurofusarin biosynthetic pathway by converting YWA1 to nor-rubrofusarin. Nor-rubrofusarin is then methylated to rubrofusarin by the O-methyltransferase aurJ. Rubrofusarin is then transported across the plasma membrane by the rubrofusarin-specific pump aurT for further enzymatic processing by the extracellular complex composed of GIP1, aurF, aurO and aurS to yield aurofusarin. This chain is Rubrofusarin-specific efflux pump aurT, found in Gibberella zeae (strain ATCC MYA-4620 / CBS 123657 / FGSC 9075 / NRRL 31084 / PH-1) (Wheat head blight fungus).